The sequence spans 950 residues: Calcium-transporting ATPase 1 (950 aa).

Ser2 is modified (N-acetylserine). The Cytoplasmic portion of the chain corresponds to 2-92; it reads SDNPFNASLL…SLFKKFLSNF (91 aa). The helical transmembrane segment at 93-111 threads the bilayer; the sequence is IEDRMILLLIGSAVVSLFM. Residues 112-116 are Lumenal-facing; it reads GNIDD. A helical membrane pass occupies residues 117–133; that stretch reads AVSITLAIFIVVTVGFV. The Cytoplasmic segment spans residues 134–288; the sequence is QEYRSEKSLE…LQLTMDKLGK (155 aa). A Phosphoserine modification is found at Ser227. Residues 289-309 traverse the membrane as a helical segment; it reads DLSLVSFIVIGMICLVGIIQG. Residues 310–323 are Lumenal-facing; it reads RSWLEMFQISVSLA. A helical membrane pass occupies residues 324–344; sequence VAAIPEGLPIIVTVTLALGVL. Topologically, residues 345–814 are cytoplasmic; that stretch reads RMAKRKAIVR…KILTHDVMKR (470 aa). Asp371 functions as the 4-aspartylphosphate intermediate in the catalytic mechanism. The chain crosses the membrane as a helical span at residues 815-835; sequence LLTTAACIIVGTVYIFVKEMA. Residues 836 to 844 are Lumenal-facing; it reads EDGKVTARD. Residues 845-862 traverse the membrane as a helical segment; sequence TTMTFTCFVFFDMFNALA. Over 863 to 884 the chain is Cytoplasmic; that stretch reads CRHNTKSIFEIGFFTNKMFNYA. A helical membrane pass occupies residues 885–905; that stretch reads VGLSLLGQMCAIYIPFFQSIF. Residues 906–909 are Lumenal-facing; that stretch reads KTEK. The chain crosses the membrane as a helical span at residues 910 to 930; it reads LGISDILLLLLISSSVFIVDE. The Cytoplasmic portion of the chain corresponds to 931–950; sequence LRKLWTRKKNEEDSTYFSNV.

This sequence belongs to the cation transport ATPase (P-type) (TC 3.A.3) family.

It is found in the golgi apparatus membrane. It catalyses the reaction Ca(2+)(in) + ATP + H2O = Ca(2+)(out) + ADP + phosphate + H(+). Its function is as follows. This magnesium-dependent enzyme catalyzes the hydrolysis of ATP coupled with the transport of calcium. Has a role in the secretory pathway. This Saccharomyces cerevisiae (strain ATCC 204508 / S288c) (Baker's yeast) protein is Calcium-transporting ATPase 1 (PMR1).